We begin with the raw amino-acid sequence, 98 residues long: YcgL domain-containing protein CJA_2437 (98 aa).

Residues 3–87 (IIAEIYRSPK…RDLVDAEAKR (85 aa)) enclose the YcgL domain.

This chain is YcgL domain-containing protein CJA_2437, found in Cellvibrio japonicus (strain Ueda107) (Pseudomonas fluorescens subsp. cellulosa).